Consider the following 938-residue polypeptide: RIPOR family member 3 (938 aa).

Residues Ser-9, Ser-24, and Ser-340 each carry the phosphoserine modification. Thr-345 bears the Phosphothreonine mark. 2 positions are modified to phosphoserine: Ser-351 and Ser-384. 2 disordered regions span residues 402–430 and 579–603; these read EMDS…FLPV and FGGS…SPSE.

Belongs to the RIPOR family.

The sequence is that of RIPOR family member 3 from Mus musculus (Mouse).